Consider the following 76-residue polypeptide: Protein OPG128 (76 aa).

Cysteine 17 and cysteine 21 are joined by a disulfide.

Belongs to the orthopoxvirus OPG128 family. As to quaternary structure, interacts with sulfhydryl oxidase OPG072; this interaction involves formation of a transient disulfide-bonded intermediate, allowing disulfide bond transfer. Interacts with OPG088; this interaction involves formation of a transient disulfide-bonded intermediate, allowing disulfide bond transfer.

Late protein which probably participates in disulfide bond formation by functioning as a thiol-disulfide transfer protein between membrane-associated OPG072 and OPG08. The complete pathway for formation of disulfide bonds in intracellular virion membrane proteins sequentially involves oxidation of OPG072, OPG128 and OPG08. In Bos taurus (Bovine), this protein is Protein OPG128 (OPG128).